The following is a 422-amino-acid chain: Phospho-N-acetylmuramoyl-pentapeptide-transferase (422 aa).

9 helical membrane passes run 28 to 48 (LMAI…FINL), 71 to 91 (VGVP…PCLL), 95 to 115 (LHNI…TLGF), 136 to 156 (IIGQ…SPSV), 208 to 228 (AQAV…TAVS), 239 to 259 (GMAA…AYVS), 279 to 299 (LVIF…YNAF), 313 to 333 (IGGI…IPIL), and 399 to 419 (KITV…IITL).

It belongs to the glycosyltransferase 4 family. MraY subfamily. Mg(2+) is required as a cofactor.

The protein localises to the cell inner membrane. It catalyses the reaction UDP-N-acetyl-alpha-D-muramoyl-L-alanyl-gamma-D-glutamyl-meso-2,6-diaminopimeloyl-D-alanyl-D-alanine + di-trans,octa-cis-undecaprenyl phosphate = di-trans,octa-cis-undecaprenyl diphospho-N-acetyl-alpha-D-muramoyl-L-alanyl-D-glutamyl-meso-2,6-diaminopimeloyl-D-alanyl-D-alanine + UMP. The protein operates within cell wall biogenesis; peptidoglycan biosynthesis. Its function is as follows. Catalyzes the initial step of the lipid cycle reactions in the biosynthesis of the cell wall peptidoglycan: transfers peptidoglycan precursor phospho-MurNAc-pentapeptide from UDP-MurNAc-pentapeptide onto the lipid carrier undecaprenyl phosphate, yielding undecaprenyl-pyrophosphoryl-MurNAc-pentapeptide, known as lipid I. The polypeptide is Phospho-N-acetylmuramoyl-pentapeptide-transferase (Phocaeicola vulgatus (strain ATCC 8482 / DSM 1447 / JCM 5826 / CCUG 4940 / NBRC 14291 / NCTC 11154) (Bacteroides vulgatus)).